The following is a 118-amino-acid chain: Aspartate 1-decarboxylase (118 aa).

Catalysis depends on S25, which acts as the Schiff-base intermediate with substrate; via pyruvic acid. S25 carries the pyruvic acid (Ser) modification. Residue T57 participates in substrate binding. The active-site Proton donor is Y58. A substrate-binding site is contributed by 73-75 (GAA).

This sequence belongs to the PanD family. In terms of assembly, heterooctamer of four alpha and four beta subunits. The cofactor is pyruvate. Is synthesized initially as an inactive proenzyme, which is activated by self-cleavage at a specific serine bond to produce a beta-subunit with a hydroxyl group at its C-terminus and an alpha-subunit with a pyruvoyl group at its N-terminus.

The protein resides in the cytoplasm. It carries out the reaction L-aspartate + H(+) = beta-alanine + CO2. It participates in cofactor biosynthesis; (R)-pantothenate biosynthesis; beta-alanine from L-aspartate: step 1/1. In terms of biological role, catalyzes the pyruvoyl-dependent decarboxylation of aspartate to produce beta-alanine. This is Aspartate 1-decarboxylase from Syntrophomonas wolfei subsp. wolfei (strain DSM 2245B / Goettingen).